Reading from the N-terminus, the 227-residue chain is MKPARELTAFMDRLGYVFEDPALLARALTHSSLSSPTRGDNQRLEFLGDRVLGLVMAEAVLAADTDAKEGTLAPRFNALVRKEACADVARQIDLGAAMRLGKSEMSAGGRRRMALLGDAMEAVIAAVYLDGGFASARDLVLRLWSERVQSVEEDARDAKTALQEWAQARGMAPPTYTEVARSGPDHAPVFRVRVTLSSGENAEAQAKAKRQAEQQAAKDLLAQLAGE.

Residues 7–132 (LTAFMDRLGY…VIAAVYLDGG (126 aa)) enclose the RNase III domain. Glu45 lines the Mg(2+) pocket. Asp49 is a catalytic residue. Positions 118 and 121 each coordinate Mg(2+). The active site involves Glu121. The DRBM domain occupies 157-226 (DAKTALQEWA…AKDLLAQLAG (70 aa)).

The protein belongs to the ribonuclease III family. As to quaternary structure, homodimer. Requires Mg(2+) as cofactor.

Its subcellular location is the cytoplasm. The enzyme catalyses Endonucleolytic cleavage to 5'-phosphomonoester.. Digests double-stranded RNA. Involved in the processing of primary rRNA transcript to yield the immediate precursors to the large and small rRNAs (23S and 16S). Processes some mRNAs, and tRNAs when they are encoded in the rRNA operon. Processes pre-crRNA and tracrRNA of type II CRISPR loci if present in the organism. In Jannaschia sp. (strain CCS1), this protein is Ribonuclease 3.